The primary structure comprises 683 residues: Boron transporter 4 (683 aa).

The Cytoplasmic portion of the chain corresponds to 1 to 38 (MEEERVDSSKRLFRGIVADLRGRALCYKEDWVAGLRSG). The helical transmembrane segment at 39-59 (FGILAPTTYIFFASALPVIAF) threads the bilayer. Residues 60–80 (GEQLSRDTEGALSTVETLAST) lie on the Extracellular side of the membrane. The chain crosses the membrane as a helical span at residues 81-101 (ALCGVIHSILGGQPLLILGVA). Over 102–126 (EPTVLMYVYLYNFAIGRPELGKQLY) the chain is Cytoplasmic. A helical transmembrane segment spans residues 127–147 (LAWAAWVCVWTALLLFVMAIL). The Extracellular segment spans residues 148 to 160 (NTADIINRFTRVA). A helical transmembrane segment spans residues 161-181 (GELFGMLISVLFIQQAIKGMV). At 182–200 (SEFGMPKDEDSKLEKYKFE) the chain is on the cytoplasmic side. Residues 201-221 (WLYTNGLLGLIFTFGLLYTAL) traverse the membrane as a helical segment. Residues 222–238 (KSRKARSWRYGTGWYRS) lie on the Extracellular side of the membrane. A helical membrane pass occupies residues 239–259 (FIADYGVPLMVVVWTALSFST). Over 260-294 (PSKLPSGVPRRLFSPLPWDSPSLSHWTVIKDMGKV) the chain is Cytoplasmic. A helical transmembrane segment spans residues 295-315 (SPGYIFAAFIPALMIAGLYFF). Residues 316-335 (DHSVASQLAQQKEFNLKKPS) are Extracellular-facing. The helical transmembrane segment at 336–356 (AYHYDILLLGFMTLICGLLGL) threads the bilayer. Residues 357–477 (PPSNGVLPQS…EQRVSNLLQS (121 aa)) are Cytoplasmic-facing. Residues 478-498 (LLVAGAVLAMPAIKLIPTSIL) form a helical membrane-spanning segment. The Extracellular segment spans residues 499–565 (WGYFAYMAID…QIFYFGLCYG (67 aa)). The helical transmembrane segment at 566–586 (VTWIPVAGIMFPVPFFLLIAI) threads the bilayer. The Cytoplasmic segment spans residues 587 to 683 (RQYILPKLFN…GDGDMSTTRE (97 aa)). 2 disordered regions span residues 617–638 (NPLE…GDAE) and 661–683 (KGNQ…TTRE).

Belongs to the anion exchanger (TC 2.A.31.3) family. As to expression, expressed in the distal sides of epidermal cells in the elongation zone of roots.

The protein resides in the membrane. Its function is as follows. Efflux-type boron transporter polarly localized in roots. Boron is essential for maintaining the integrity of plants cell walls. This Arabidopsis thaliana (Mouse-ear cress) protein is Boron transporter 4 (BOR4).